The chain runs to 248 residues: 3-deoxy-manno-octulosonate cytidylyltransferase (248 aa).

Belongs to the KdsB family.

The protein localises to the cytoplasm. The catalysed reaction is 3-deoxy-alpha-D-manno-oct-2-ulosonate + CTP = CMP-3-deoxy-beta-D-manno-octulosonate + diphosphate. The protein operates within nucleotide-sugar biosynthesis; CMP-3-deoxy-D-manno-octulosonate biosynthesis; CMP-3-deoxy-D-manno-octulosonate from 3-deoxy-D-manno-octulosonate and CTP: step 1/1. It functions in the pathway bacterial outer membrane biogenesis; lipopolysaccharide biosynthesis. Activates KDO (a required 8-carbon sugar) for incorporation into bacterial lipopolysaccharide in Gram-negative bacteria. This is 3-deoxy-manno-octulosonate cytidylyltransferase from Citrobacter koseri (strain ATCC BAA-895 / CDC 4225-83 / SGSC4696).